The chain runs to 213 residues: Orotate phosphoribosyltransferase (213 aa).

K26 contacts 5-phospho-alpha-D-ribose 1-diphosphate. 34–35 (FF) serves as a coordination point for orotate. 5-phospho-alpha-D-ribose 1-diphosphate is bound by residues 72–73 (YK), R99, K100, K103, H105, and 124–132 (DDVITAGTA). Residues T128 and R156 each coordinate orotate.

The protein belongs to the purine/pyrimidine phosphoribosyltransferase family. PyrE subfamily. Homodimer. Requires Mg(2+) as cofactor.

It carries out the reaction orotidine 5'-phosphate + diphosphate = orotate + 5-phospho-alpha-D-ribose 1-diphosphate. It participates in pyrimidine metabolism; UMP biosynthesis via de novo pathway; UMP from orotate: step 1/2. Catalyzes the transfer of a ribosyl phosphate group from 5-phosphoribose 1-diphosphate to orotate, leading to the formation of orotidine monophosphate (OMP). The sequence is that of Orotate phosphoribosyltransferase from Aliivibrio fischeri (strain MJ11) (Vibrio fischeri).